A 297-amino-acid polypeptide reads, in one-letter code: Calponin-1 (297 aa).

Positions 28-131 constitute a Calponin-homology (CH) domain; that stretch reads HQREQELREW…STLLALASMA (104 aa). 3 Calponin-like repeats span residues 164–189, 204–229, and 243–268; these read IGLQ…RHLY, ISLQ…RQIF, and VSLQ…RQVY. The residue at position 170 (threonine 170) is a Phosphothreonine; by ROCK2. A Phosphoserine; by ROCK2 modification is found at serine 175. Phosphothreonine; by ROCK2 is present on residues threonine 180 and threonine 184. At threonine 259 the chain carries Phosphothreonine; by ROCK2.

Belongs to the calponin family. In terms of assembly, part of cGMP kinase signaling complex at least composed of ACTA2/alpha-actin, CNN1/calponin H1, PLN/phospholamban, PRKG1 and ITPR1. Smooth muscle, and tissues containing significant amounts of smooth muscle.

In terms of biological role, thin filament-associated protein that is implicated in the regulation and modulation of smooth muscle contraction. It is capable of binding to actin, calmodulin and tropomyosin. The interaction of calponin with actin inhibits the actomyosin Mg-ATPase activity. This chain is Calponin-1 (Cnn1), found in Mus musculus (Mouse).